Reading from the N-terminus, the 365-residue chain is Aminomethyltransferase (365 aa).

The protein belongs to the GcvT family. In terms of assembly, the glycine cleavage system is composed of four proteins: P, T, L and H.

It carries out the reaction N(6)-[(R)-S(8)-aminomethyldihydrolipoyl]-L-lysyl-[protein] + (6S)-5,6,7,8-tetrahydrofolate = N(6)-[(R)-dihydrolipoyl]-L-lysyl-[protein] + (6R)-5,10-methylene-5,6,7,8-tetrahydrofolate + NH4(+). The glycine cleavage system catalyzes the degradation of glycine. This is Aminomethyltransferase from Cronobacter sakazakii (strain ATCC BAA-894) (Enterobacter sakazakii).